The chain runs to 351 residues: Uroporphyrinogen decarboxylase (351 aa).

Substrate contacts are provided by residues 25–29 (RQAGR), D74, Y151, S206, and H325.

Belongs to the uroporphyrinogen decarboxylase family. In terms of assembly, homodimer.

It localises to the cytoplasm. It catalyses the reaction uroporphyrinogen III + 4 H(+) = coproporphyrinogen III + 4 CO2. Its pathway is porphyrin-containing compound metabolism; protoporphyrin-IX biosynthesis; coproporphyrinogen-III from 5-aminolevulinate: step 4/4. Functionally, catalyzes the decarboxylation of four acetate groups of uroporphyrinogen-III to yield coproporphyrinogen-III. The polypeptide is Uroporphyrinogen decarboxylase (Chlorobium limicola (strain DSM 245 / NBRC 103803 / 6330)).